We begin with the raw amino-acid sequence, 258 residues long: UPF0246 protein MS0374 (258 aa).

The protein belongs to the UPF0246 family.

This Mannheimia succiniciproducens (strain KCTC 0769BP / MBEL55E) protein is UPF0246 protein MS0374.